We begin with the raw amino-acid sequence, 346 residues long: Angiopoietin-related protein 7 (346 aa).

Residues 1–26 form the signal peptide; that stretch reads MLKKPLSAVTWLCIFIVAFVSHPAWL. Residues 39 to 119 adopt a coiled-coil conformation; sequence QLKAANCCEE…DIMQLQAAQT (81 aa). N-linked (GlcNAc...) asparagine glycosylation is present at N58. The region spanning 122–343 is the Fibrinogen C-terminal domain; the sequence is QTSADAIYDC…RVEMKIRPED (222 aa). C131 and C162 form a disulfide bridge. 2 N-linked (GlcNAc...) asparagine glycosylation sites follow: N253 and N267. The cysteines at positions 285 and 298 are disulfide-linked.

As to quaternary structure, homotetramer; disulfide-linked. As to expression, highly expressed in the cornea (at protein level). Expression is restricted to the stromal layer. Also detected at the junction between the corneal stromal layer and the conjuctiva. Not detected in the sclera.

The protein localises to the secreted. Functionally, has a role in the formation and organization of the extracellular matrix. In the eye, it functions as a mediator of dexamethasone-induced matrix deposition in the trabecular meshwork, the tissue responsible for the outflow of the ocular aqueous humor and for the maintenance of intraocular pressure. Is a negative regulator of angiogenesis in the cornea, and plays a major role in maintaining corneal avascularity and transparency. In Homo sapiens (Human), this protein is Angiopoietin-related protein 7 (ANGPTL7).